Here is a 482-residue protein sequence, read N- to C-terminus: Potential E3 ubiquitin-protein ligase ariadne-2 (482 aa).

The segment at 125 to 334 (AKGYCSVCAM…SEYYECSRYK (210 aa)) is TRIAD supradomain. Cysteine 129, cysteine 132, cysteine 145, histidine 147, cysteine 150, cysteine 153, cysteine 172, cysteine 177, cysteine 218, cysteine 223, cysteine 239, cysteine 242, cysteine 247, cysteine 250, histidine 255, cysteine 260, cysteine 287, and cysteine 290 together coordinate Zn(2+). The RING-type 1 zinc-finger motif lies at 129–177 (CSVCAMDGYTELPHLTCGHCFCEHCWKSHVESRLSEGVASRIECMESEC). The IBR-type zinc-finger motif lies at 198 to 260 (LKYERFLLRD…GADYHAPTSC (63 aa)). Residues 287–316 (CPQCHSCIEKAGGCNHIQCTRCRHHFCWMC) form an RING-type 2; atypical zinc finger. Cysteine 300 is a catalytic residue. Cysteine 305, cysteine 308, cysteine 313, cysteine 316, histidine 323, and cysteine 330 together coordinate Zn(2+). The stretch at 433–459 (FEYQQAQLEKEVEELAWAVERADGTAR) forms a coiled coil.

Belongs to the RBR family. Ariadne subfamily.

The protein localises to the nucleus. The catalysed reaction is [E2 ubiquitin-conjugating enzyme]-S-ubiquitinyl-L-cysteine + [acceptor protein]-L-lysine = [E2 ubiquitin-conjugating enzyme]-L-cysteine + [acceptor protein]-N(6)-ubiquitinyl-L-lysine.. Might act as an E3 ubiquitin-protein ligase, or as part of E3 complex, which accepts ubiquitin from specific E2 ubiquitin-conjugating enzymes, such as UBC-2/UBE2L3, and then transfers it to substrates. The sequence is that of Potential E3 ubiquitin-protein ligase ariadne-2 from Caenorhabditis elegans.